We begin with the raw amino-acid sequence, 289 residues long: BTB/POZ domain-containing protein KCTD7 (289 aa).

A compositionally biased stretch (polar residues) spans 1–10 (MVVVTGQSKG). A disordered region spans residues 1-35 (MVVVTGQSKGSGDPDEAMSSSDAEDDFQEPATPTA). The BTB domain occupies 51–149 (EVVPLNVGGM…HLEDVQPLKG (99 aa)).

The protein localises to the cell membrane. It localises to the cytoplasm. It is found in the cytosol. Functionally, may be involved in the control of excitability of cortical neurons. The polypeptide is BTB/POZ domain-containing protein KCTD7 (KCTD7) (Gallus gallus (Chicken)).